The sequence spans 320 residues: 4-hydroxy-3-methylbut-2-enyl diphosphate reductase (320 aa).

Cysteine 13 lines the [4Fe-4S] cluster pocket. (2E)-4-hydroxy-3-methylbut-2-enyl diphosphate-binding residues include histidine 41 and histidine 75. Positions 41 and 75 each coordinate dimethylallyl diphosphate. The isopentenyl diphosphate site is built by histidine 41 and histidine 75. Residue cysteine 97 coordinates [4Fe-4S] cluster. Histidine 125 contacts (2E)-4-hydroxy-3-methylbut-2-enyl diphosphate. Histidine 125 is a dimethylallyl diphosphate binding site. Histidine 125 lines the isopentenyl diphosphate pocket. Residue glutamate 127 is the Proton donor of the active site. Threonine 168 is a (2E)-4-hydroxy-3-methylbut-2-enyl diphosphate binding site. [4Fe-4S] cluster is bound at residue cysteine 225. Positions 253, 254, 255, and 302 each coordinate (2E)-4-hydroxy-3-methylbut-2-enyl diphosphate. Serine 253, serine 254, asparagine 255, and serine 302 together coordinate dimethylallyl diphosphate. 4 residues coordinate isopentenyl diphosphate: serine 253, serine 254, asparagine 255, and serine 302.

Belongs to the IspH family. The cofactor is [4Fe-4S] cluster.

It catalyses the reaction isopentenyl diphosphate + 2 oxidized [2Fe-2S]-[ferredoxin] + H2O = (2E)-4-hydroxy-3-methylbut-2-enyl diphosphate + 2 reduced [2Fe-2S]-[ferredoxin] + 2 H(+). It carries out the reaction dimethylallyl diphosphate + 2 oxidized [2Fe-2S]-[ferredoxin] + H2O = (2E)-4-hydroxy-3-methylbut-2-enyl diphosphate + 2 reduced [2Fe-2S]-[ferredoxin] + 2 H(+). Its pathway is isoprenoid biosynthesis; dimethylallyl diphosphate biosynthesis; dimethylallyl diphosphate from (2E)-4-hydroxy-3-methylbutenyl diphosphate: step 1/1. It functions in the pathway isoprenoid biosynthesis; isopentenyl diphosphate biosynthesis via DXP pathway; isopentenyl diphosphate from 1-deoxy-D-xylulose 5-phosphate: step 6/6. Its function is as follows. Catalyzes the conversion of 1-hydroxy-2-methyl-2-(E)-butenyl 4-diphosphate (HMBPP) into a mixture of isopentenyl diphosphate (IPP) and dimethylallyl diphosphate (DMAPP). Acts in the terminal step of the DOXP/MEP pathway for isoprenoid precursor biosynthesis. The sequence is that of 4-hydroxy-3-methylbut-2-enyl diphosphate reductase from Chlorobium luteolum (strain DSM 273 / BCRC 81028 / 2530) (Pelodictyon luteolum).